Reading from the N-terminus, the 79-residue chain is Cell division protein ZapB (79 aa).

The stretch at 4–78 (EVFEKLEAKV…LRALLGKMEE (75 aa)) forms a coiled coil.

The protein belongs to the ZapB family. Homodimer. The ends of the coiled-coil dimer bind to each other, forming polymers. Interacts with FtsZ.

The protein localises to the cytoplasm. Functionally, non-essential, abundant cell division factor that is required for proper Z-ring formation. It is recruited early to the divisome by direct interaction with FtsZ, stimulating Z-ring assembly and thereby promoting cell division earlier in the cell cycle. Its recruitment to the Z-ring requires functional FtsA or ZipA. The polypeptide is Cell division protein ZapB (Pectobacterium atrosepticum (strain SCRI 1043 / ATCC BAA-672) (Erwinia carotovora subsp. atroseptica)).